Here is a 137-residue protein sequence, read N- to C-terminus: Large ribosomal subunit protein uL13 (137 aa).

It belongs to the universal ribosomal protein uL13 family. In terms of assembly, part of the 50S ribosomal subunit.

Functionally, this protein is one of the early assembly proteins of the 50S ribosomal subunit, although it is not seen to bind rRNA by itself. It is important during the early stages of 50S assembly. This chain is Large ribosomal subunit protein uL13, found in Methanococcus maripaludis (strain DSM 14266 / JCM 13030 / NBRC 101832 / S2 / LL).